A 372-amino-acid polypeptide reads, in one-letter code: Cytochrome b (372 aa).

4 helical membrane-spanning segments follow: residues Phe25–Ile45, Trp69–Ile90, Trp105–Leu125, and Phe170–Met190. Heme b contacts are provided by His75 and His89. Heme b contacts are provided by His174 and His188. An a ubiquinone-binding site is contributed by His193. Transmembrane regions (helical) follow at residues Tyr218–Ser238, Leu280–His300, Leu312–Ser332, and Phe339–Pro358.

It belongs to the cytochrome b family. As to quaternary structure, the cytochrome bc1 complex contains 3 respiratory subunits (MT-CYB, CYC1 and UQCRFS1), 2 core proteins (UQCRC1 and UQCRC2) and probably 6 low-molecular weight proteins. Heme b is required as a cofactor.

It is found in the mitochondrion inner membrane. In terms of biological role, component of the ubiquinol-cytochrome c reductase complex (complex III or cytochrome b-c1 complex) that is part of the mitochondrial respiratory chain. The b-c1 complex mediates electron transfer from ubiquinol to cytochrome c. Contributes to the generation of a proton gradient across the mitochondrial membrane that is then used for ATP synthesis. In Hemachatus haemachatus (Rinkhals), this protein is Cytochrome b (MT-CYB).